A 121-amino-acid polypeptide reads, in one-letter code: Large ribosomal subunit protein bL20 (121 aa).

Belongs to the bacterial ribosomal protein bL20 family.

Functionally, binds directly to 23S ribosomal RNA and is necessary for the in vitro assembly process of the 50S ribosomal subunit. It is not involved in the protein synthesizing functions of that subunit. This Koribacter versatilis (strain Ellin345) protein is Large ribosomal subunit protein bL20.